Reading from the N-terminus, the 942-residue chain is WD repeat-containing protein 3 (942 aa).

5 WD repeats span residues serine 21–isoleucine 60, glycine 63–threonine 102, glycine 105–arginine 144, glycine 147–threonine 186, and glycine 189–aspartate 228. Residues glutamate 230–aspartate 263 form a disordered region. The span at proline 247–lysine 260 shows a compositional bias: acidic residues. A Phosphoserine modification is found at serine 249. 8 WD repeats span residues glutamate 277 to lysine 316, glycine 412 to threonine 450, proline 452 to threonine 490, alanine 493 to serine 532, glutamine 546 to serine 585, glycine 588 to phenylalanine 629, alanine 630 to threonine 669, and glycine 672 to glutamate 711. Residue lysine 473 forms a Glycyl lysine isopeptide (Lys-Gly) (interchain with G-Cter in SUMO2) linkage. Residues glutamate 723–asparagine 742 are disordered. Serine 725 carries the phosphoserine modification.

The protein belongs to the WD repeat WDR3/UTP12 family. As to quaternary structure, part of the small subunit (SSU) processome, composed of more than 70 proteins and the RNA chaperone small nucleolar RNA (snoRNA) U3.

The protein resides in the nucleus. The protein localises to the nucleolus. Its function is as follows. Part of the small subunit (SSU) processome, first precursor of the small eukaryotic ribosomal subunit. During the assembly of the SSU processome in the nucleolus, many ribosome biogenesis factors, an RNA chaperone and ribosomal proteins associate with the nascent pre-rRNA and work in concert to generate RNA folding, modifications, rearrangements and cleavage as well as targeted degradation of pre-ribosomal RNA by the RNA exosome. The protein is WD repeat-containing protein 3 (Wdr3) of Mus musculus (Mouse).